The following is a 281-amino-acid chain: Large ribosomal subunit protein uL2 (281 aa).

The interval R210–R281 is disordered. Residues T254 to R281 show a composition bias toward basic residues.

It belongs to the universal ribosomal protein uL2 family. Part of the 50S ribosomal subunit. Forms a bridge to the 30S subunit in the 70S ribosome.

One of the primary rRNA binding proteins. Required for association of the 30S and 50S subunits to form the 70S ribosome, for tRNA binding and peptide bond formation. It has been suggested to have peptidyltransferase activity; this is somewhat controversial. Makes several contacts with the 16S rRNA in the 70S ribosome. The protein is Large ribosomal subunit protein uL2 of Limosilactobacillus reuteri subsp. reuteri (strain JCM 1112) (Lactobacillus reuteri).